The chain runs to 889 residues: Alanine--tRNA ligase (889 aa).

4 residues coordinate Zn(2+): His574, His578, Cys676, and His680.

This sequence belongs to the class-II aminoacyl-tRNA synthetase family. Zn(2+) is required as a cofactor.

Its subcellular location is the cytoplasm. It catalyses the reaction tRNA(Ala) + L-alanine + ATP = L-alanyl-tRNA(Ala) + AMP + diphosphate. Its function is as follows. Catalyzes the attachment of alanine to tRNA(Ala) in a two-step reaction: alanine is first activated by ATP to form Ala-AMP and then transferred to the acceptor end of tRNA(Ala). Also edits incorrectly charged Ser-tRNA(Ala) and Gly-tRNA(Ala) via its editing domain. This is Alanine--tRNA ligase from Thermobifida fusca (strain YX).